The primary structure comprises 692 residues: Elongation factor G (692 aa).

The tr-type G domain occupies 8–282 (ENTRNIGIMA…AVIDYLPSPL (275 aa)). GTP is bound by residues 17–24 (AHIDAGKT), 81–85 (DTPGH), and 135–138 (NKMD).

This sequence belongs to the TRAFAC class translation factor GTPase superfamily. Classic translation factor GTPase family. EF-G/EF-2 subfamily.

Its subcellular location is the cytoplasm. Functionally, catalyzes the GTP-dependent ribosomal translocation step during translation elongation. During this step, the ribosome changes from the pre-translocational (PRE) to the post-translocational (POST) state as the newly formed A-site-bound peptidyl-tRNA and P-site-bound deacylated tRNA move to the P and E sites, respectively. Catalyzes the coordinated movement of the two tRNA molecules, the mRNA and conformational changes in the ribosome. This chain is Elongation factor G, found in Bacillus cereus (strain ATCC 10987 / NRS 248).